The following is a 262-amino-acid chain: Cytochrome c oxidase subunit 3 (262 aa).

Transmembrane regions (helical) follow at residues 39 to 59 (YTMT…YQWW), 83 to 103 (GMIL…WAFF), 120 to 140 (VGII…ILLA), 163 to 183 (GLFF…YEYI), 201 to 221 (ATGF…ICFL), and 240 to 260 (AWYW…IYWW).

Belongs to the cytochrome c oxidase subunit 3 family. As to quaternary structure, component of the cytochrome c oxidase (complex IV, CIV), a multisubunit enzyme composed of a catalytic core of 3 subunits and several supernumerary subunits. The complex exists as a monomer or a dimer and forms supercomplexes (SCs) in the inner mitochondrial membrane with ubiquinol-cytochrome c oxidoreductase (cytochrome b-c1 complex, complex III, CIII).

Its subcellular location is the mitochondrion inner membrane. The enzyme catalyses 4 Fe(II)-[cytochrome c] + O2 + 8 H(+)(in) = 4 Fe(III)-[cytochrome c] + 2 H2O + 4 H(+)(out). Component of the cytochrome c oxidase, the last enzyme in the mitochondrial electron transport chain which drives oxidative phosphorylation. The respiratory chain contains 3 multisubunit complexes succinate dehydrogenase (complex II, CII), ubiquinol-cytochrome c oxidoreductase (cytochrome b-c1 complex, complex III, CIII) and cytochrome c oxidase (complex IV, CIV), that cooperate to transfer electrons derived from NADH and succinate to molecular oxygen, creating an electrochemical gradient over the inner membrane that drives transmembrane transport and the ATP synthase. Cytochrome c oxidase is the component of the respiratory chain that catalyzes the reduction of oxygen to water. Electrons originating from reduced cytochrome c in the intermembrane space (IMS) are transferred via the dinuclear copper A center (CU(A)) of subunit 2 and heme A of subunit 1 to the active site in subunit 1, a binuclear center (BNC) formed by heme A3 and copper B (CU(B)). The BNC reduces molecular oxygen to 2 water molecules using 4 electrons from cytochrome c in the IMS and 4 protons from the mitochondrial matrix. The protein is Cytochrome c oxidase subunit 3 (COIII) of Anopheles quadrimaculatus (Common malaria mosquito).